Here is a 2760-residue protein sequence, read N- to C-terminus: A-kinase anchor protein 13 (2760 aa).

Disordered stretches follow at residues 356 to 388, 442 to 517, 530 to 577, 604 to 711, 729 to 857, 890 to 940, 954 to 1029, and 1132 to 1162; these read CSHK…QDSC, PDAR…EPKQ, AAGA…VLPA, SSLD…AAHN, EKDL…EQEG, GGSI…QEIS, EKAL…ASEA, and EGTD…DLPT. The segment covering 378–388 has biased composition (polar residues); sequence DSRSASHQDSC. Over residues 442–454 the composition is skewed to basic and acidic residues; the sequence is PDARQHSSGRELP. The tract at residues 482 to 504 is important for interaction with PRKAR2A; it reads QNSKPQVGESAKERLENSDISSA. Positions 530 to 547 are enriched in low complexity; the sequence is AAGADAPAEASPAWSPEE. 3 stretches are compositionally biased toward polar residues: residues 620 to 638, 654 to 664, and 701 to 711; these read KQNS…SQAP, CPQSTETSSGG, and DTVTSDTAAHN. Residues 769–780 are compositionally biased toward low complexity; that stretch reads SSFSLASSPESE. A Phosphoserine modification is found at Ser776. Thr801 carries the phosphothreonine modification. The segment covering 814–826 has biased composition (basic and acidic residues); that stretch reads PDGRDLNDTDKVG. The span at 839–849 shows a compositional bias: polar residues; sequence ELQTSMGNTSP. Over residues 906 to 931 the composition is skewed to basic and acidic residues; that stretch reads GKDKATKCPSVKEDVHSSEMSREDQR. Position 932 is a phosphothreonine (Thr932). Polar residues-rich tracts occupy residues 958–972 and 1001–1020; these read QHSN…CLQT and TSLS…SGSS. Ser962 carries the post-translational modification Phosphoserine. Residues 1213–1228 are important for interaction with PRKAR2A; that stretch reads SIEETATRIVEAVIKQ. Disordered regions lie at residues 1392–1411, 1425–1508, and 1520–1539; these read GVLQ…PSDE, LLCD…VPAN, and SPFR…DAEM. Positions 1428 to 1439 are enriched in low complexity; that stretch reads DTTGSSSSTDDT. A compositionally biased stretch (polar residues) spans 1449–1472; the sequence is GSDVSLPQTSKLNRSRNHQSSNGF. Phosphoserine occurs at positions 1450, 1468, 1501, 1526, and 1585. The interval 1546–1695 is important for interaction with MAP2K3; sequence QVLGHVVRRP…SRPFHSASAN (150 aa). Residues 1592–1628 are disordered; it reads GGGVGNKPSSSLEISSANSSELRNPFSGEEQRSSLMS. Low complexity predominate over residues 1600 to 1611; it reads SSSLEISSANSS. Residues Ser1625, Ser1628, and Ser1630 each carry the phosphoserine modification. At Lys1654 the chain carries N6-methyllysine. The segment at 1733 to 1755 is disordered; sequence RNKMSSSKKSKKEKDKKTLNGHT. The Phorbol-ester/DAG-type zinc finger occupies 1753–1800; it reads GHTFSPIPIVGPINCSQCMKPFTNKDAYTCASCGAFVHKGCRENLASC. Phosphoserine occurs at positions 1838, 1857, and 1891. The interaction with ESR1 stretch occupies residues 1881–2760; it reads MSNTWKFLSH…VPAEGEEIFC (880 aa). The residue at position 1892 (Thr1892) is a Phosphothreonine. Phosphoserine occurs at positions 1894 and 1907. The 198-residue stretch at 1956-2153 folds into the DH domain; that stretch reads KRQEVIYELM…KDVIGAVDSK (198 aa). The PH domain maps to 2176-2280; sequence MRMKSGQMFA…WIQIIQDTIN (105 aa). Residues Ser2292 and Ser2345 each carry the phosphoserine modification. The stretch at 2292-2329 forms a coiled coil; sequence SENEEEKRLLDTKARELKEQLQQKDQQILLLLEEKEMI. A Phosphothreonine modification is found at Thr2415. A disordered region spans residues 2422-2450; it reads HQLNASKGGEKEEGDDGQDLRRTESDSGL. The span at 2439 to 2450 shows a compositional bias: basic and acidic residues; sequence QDLRRTESDSGL. Ser2511 and Ser2514 each carry phosphoserine. The stretch at 2516–2632 forms a coiled coil; that stretch reads LIEQEKQRSL…LSQRQMEQDL (117 aa). Disordered regions lie at residues 2568–2588 and 2660–2760; these read AERE…REEL and TPSI…EIFC. 2 stretches are compositionally biased toward polar residues: residues 2660–2684 and 2696–2711; these read TPSI…SISR and SSAS…SQAP. Ser2676 carries the post-translational modification Phosphoserine. The span at 2743 to 2752 shows a compositional bias: low complexity; that stretch reads PGDGPAPEVP.

As to quaternary structure, interacts with the cAMP-dependent protein kinase (PKA) holoenzyme and with the regulatory subunit PRKAR2A. Interacts with RHOA. Also interacts with RHOB and RHOC. Identified in a ternary complex with RHOA and PRKAR2A. Identified in a complex with NR3C1 and RHOA. Interacts with BRAF and KSR1. Identified in a complex with BRAF and KSR1. Component of a signaling complex containing at least AKAP13, PKN1, MAPK14, ZAK and MAP2K3. Within this complex, AKAP13 interacts directly with PKN1, which in turn recruits MAPK14, MAP2K3 and ZAK. Interacts (phosphorylated form) with YWHAB and YWHAZ. Interaction with YWHAB inhibits activation of RHOA, interferes with PKN1 binding and activation of MAP kinases. Interacts with GNA12. Interacts with IKBKB. Interacts with ESR1, THRA, PPARA and NME2. Interacts (via the C-terminal domain after the PH domain) with MEF2C and RXRB. Interacts (via the C-terminal domain after the PH domain) with PRKD1. Detected in bone osteoblasts (at protein level).

It is found in the cytoplasm. Its subcellular location is the cytosol. The protein localises to the cell cortex. It localises to the nucleus. The protein resides in the membrane. Scaffold protein that plays an important role in assembling signaling complexes downstream of several types of G protein-coupled receptors. Activates RHOA in response to signaling via G protein-coupled receptors via its function as Rho guanine nucleotide exchange factor. May also activate other Rho family members. Part of a kinase signaling complex that links ADRA1A and ADRA1B adrenergic receptor signaling to the activation of downstream p38 MAP kinases, such as MAPK11 and MAPK14. Part of a signaling complex that links ADRA1B signaling to the activation of RHOA and IKBKB/IKKB, leading to increased NF-kappa-B transcriptional activity. Part of a RHOA-dependent signaling cascade that mediates responses to lysophosphatidic acid (LPA), a signaling molecule that activates G-protein coupled receptors and potentiates transcriptional activation of the glucocorticoid receptor NR3C1. Part of a signaling cascade that stimulates MEF2C-dependent gene expression in response to lysophosphatidic acid (LPA). Part of a signaling pathway that activates MAPK11 and/or MAPK14 and leads to increased transcription activation of the estrogen receptors ESR1 and ESR2. Part of a signaling cascade that links cAMP and EGFR signaling to BRAF signaling and to PKA-mediated phosphorylation of KSR1, leading to the activation of downstream MAP kinases, such as MAPK1 or MAPK3. Functions as a scaffold protein that anchors cAMP-dependent protein kinase (PKA) and PRKD1. This promotes activation of PRKD1, leading to increased phosphorylation of HDAC5 and ultimately cardiomyocyte hypertrophy. Has no guanine nucleotide exchange activity on CDC42, Ras or Rac. Required for normal embryonic heart development, and in particular for normal sarcomere formation in the developing cardiomyocytes. Plays a role in cardiomyocyte growth and cardiac hypertrophy in response to activation of the beta-adrenergic receptor by phenylephrine or isoproterenol. Required for normal adaptive cardiac hypertrophy in response to pressure overload. Plays a role in osteogenesis. This is A-kinase anchor protein 13 from Rattus norvegicus (Rat).